Here is a 753-residue protein sequence, read N- to C-terminus: 5-methyltetrahydropteroyltriglutamate--homocysteine methyltransferase (753 aa).

Residues 17–20 (RELK) and Lys117 contribute to the 5-methyltetrahydropteroyltri-L-glutamate site. Residues 431–433 (IGS) and Glu484 contribute to the L-homocysteine site. L-methionine contacts are provided by residues 431–433 (IGS) and Glu484. 5-methyltetrahydropteroyltri-L-glutamate contacts are provided by residues 515–516 (RC) and Trp561. Asp599 is an L-homocysteine binding site. Asp599 provides a ligand contact to L-methionine. A 5-methyltetrahydropteroyltri-L-glutamate-binding site is contributed by Glu605. Zn(2+) contacts are provided by His641, Cys643, and Glu665. His694 (proton donor) is an active-site residue. Position 726 (Cys726) interacts with Zn(2+).

This sequence belongs to the vitamin-B12 independent methionine synthase family. Zn(2+) serves as cofactor.

It catalyses the reaction 5-methyltetrahydropteroyltri-L-glutamate + L-homocysteine = tetrahydropteroyltri-L-glutamate + L-methionine. Its pathway is amino-acid biosynthesis; L-methionine biosynthesis via de novo pathway; L-methionine from L-homocysteine (MetE route): step 1/1. Its function is as follows. Catalyzes the transfer of a methyl group from 5-methyltetrahydrofolate to homocysteine resulting in methionine formation. The polypeptide is 5-methyltetrahydropteroyltriglutamate--homocysteine methyltransferase (Escherichia fergusonii (strain ATCC 35469 / DSM 13698 / CCUG 18766 / IAM 14443 / JCM 21226 / LMG 7866 / NBRC 102419 / NCTC 12128 / CDC 0568-73)).